We begin with the raw amino-acid sequence, 126 residues long: UPF0325 protein VFMJ11_2099 (126 aa).

This sequence belongs to the UPF0325 family.

The sequence is that of UPF0325 protein VFMJ11_2099 from Aliivibrio fischeri (strain MJ11) (Vibrio fischeri).